Here is a 36-residue protein sequence, read N- to C-terminus: VCVLAHHFGKEFTPQVQAAYQKVVAGVANALAHKYH.

The 36-residue stretch at 1–36 (VCVLAHHFGKEFTPQVQAAYQKVVAGVANALAHKYH) folds into the Globin domain. At Lys34 the chain carries N6-acetyllysine.

This sequence belongs to the globin family. As to quaternary structure, heterotetramer of two alpha chains and two beta chains. As to expression, red blood cells.

Functionally, involved in oxygen transport from the lung to the various peripheral tissues. This chain is Hemoglobin subunit beta (HBB), found in Pongo pygmaeus (Bornean orangutan).